Consider the following 350-residue polypeptide: tRNA uridine(34) hydroxylase (350 aa).

Residues 146–240 form the Rhodanese domain; that stretch reads DDPDAVFIDM…YARRAREQGL (95 aa). The active-site Cysteine persulfide intermediate is C200. The span at 319-328 shows a compositional bias: basic and acidic residues; the sequence is RRRRAGRENG. The interval 319–350 is disordered; that stretch reads RRRRAGRENGNKIFNKSRGRLNSKLSIPDPAE.

This sequence belongs to the TrhO family.

The catalysed reaction is uridine(34) in tRNA + AH2 + O2 = 5-hydroxyuridine(34) in tRNA + A + H2O. Functionally, catalyzes oxygen-dependent 5-hydroxyuridine (ho5U) modification at position 34 in tRNAs. In Salmonella agona (strain SL483), this protein is tRNA uridine(34) hydroxylase.